Reading from the N-terminus, the 125-residue chain is Small ribosomal subunit protein eS8 (125 aa).

The segment at 1 to 30 (MTIFQGRATRKPSGGKLRPNHSKRRYELGR) is disordered.

It belongs to the eukaryotic ribosomal protein eS8 family. As to quaternary structure, part of the 30S ribosomal subunit.

This is Small ribosomal subunit protein eS8 from Picrophilus torridus (strain ATCC 700027 / DSM 9790 / JCM 10055 / NBRC 100828 / KAW 2/3).